The primary structure comprises 302 residues: Glycine--tRNA ligase alpha subunit (302 aa).

It belongs to the class-II aminoacyl-tRNA synthetase family. Tetramer of two alpha and two beta subunits.

It localises to the cytoplasm. It catalyses the reaction tRNA(Gly) + glycine + ATP = glycyl-tRNA(Gly) + AMP + diphosphate. The polypeptide is Glycine--tRNA ligase alpha subunit (Xanthomonas axonopodis pv. citri (strain 306)).